A 279-amino-acid chain; its full sequence is Dermonecrotic toxin LbSicTox-alphaIB1a (279 aa).

The active site involves histidine 11. Glutamate 31 and aspartate 33 together coordinate Mg(2+). Histidine 47 serves as the catalytic Nucleophile. Intrachain disulfides connect cysteine 51–cysteine 57 and cysteine 53–cysteine 196. Aspartate 91 lines the Mg(2+) pocket.

The protein belongs to the arthropod phospholipase D family. Class II subfamily. Class IIa sub-subfamily. Mg(2+) is required as a cofactor. In terms of tissue distribution, expressed by the venom gland.

It localises to the secreted. It carries out the reaction an N-(acyl)-sphingosylphosphocholine = an N-(acyl)-sphingosyl-1,3-cyclic phosphate + choline. The enzyme catalyses an N-(acyl)-sphingosylphosphoethanolamine = an N-(acyl)-sphingosyl-1,3-cyclic phosphate + ethanolamine. It catalyses the reaction a 1-acyl-sn-glycero-3-phosphocholine = a 1-acyl-sn-glycero-2,3-cyclic phosphate + choline. The catalysed reaction is a 1-acyl-sn-glycero-3-phosphoethanolamine = a 1-acyl-sn-glycero-2,3-cyclic phosphate + ethanolamine. Its function is as follows. Dermonecrotic toxins cleave the phosphodiester linkage between the phosphate and headgroup of certain phospholipids (sphingolipid and lysolipid substrates), forming an alcohol (often choline) and a cyclic phosphate. This toxin acts on sphingomyelin (SM) with high activity (about 30.5-31.5 U/mg). It may also act on ceramide phosphoethanolamine (CPE), lysophosphatidylcholine (LPC) and lysophosphatidylethanolamine (LPE), but not on lysophosphatidylserine (LPS), and lysophosphatidylglycerol (LPG). It acts by transphosphatidylation, releasing exclusively cyclic phosphate products as second products. Induces dermonecrosis, hemolysis, increased vascular permeability, edema, inflammatory response, and platelet aggregation. Is lethal to mice. The sequence is that of Dermonecrotic toxin LbSicTox-alphaIB1a from Loxosceles boneti (North American fiddleback spider).